Consider the following 682-residue polypeptide: Putative L-type lectin-domain containing receptor kinase I.1 (682 aa).

A signal peptide spans M1–L19. At I20 to P292 the chain is on the extracellular side. Residues D27–S264 form a legume-lectin like region. N-linked (GlcNAc...) asparagine glycans are attached at residues N60, N130, N187, N210, and N231. A helical membrane pass occupies residues L293–Y313. Residues L314–R682 are Cytoplasmic-facing. The region spanning F348 to L622 is the Protein kinase domain. Residues L354–V362 and K376 each bind ATP. D472 (proton acceptor) is an active-site residue.

It in the C-terminal section; belongs to the protein kinase superfamily. Ser/Thr protein kinase family. In the N-terminal section; belongs to the leguminous lectin family.

It is found in the cell membrane. The catalysed reaction is L-seryl-[protein] + ATP = O-phospho-L-seryl-[protein] + ADP + H(+). It carries out the reaction L-threonyl-[protein] + ATP = O-phospho-L-threonyl-[protein] + ADP + H(+). In terms of biological role, involved in resistance response to the pathogenic fungus Alternaria brassicicola. The sequence is that of Putative L-type lectin-domain containing receptor kinase I.1 from Arabidopsis thaliana (Mouse-ear cress).